The following is a 148-amino-acid chain: Large ribosomal subunit protein uL22 (148 aa).

This sequence belongs to the universal ribosomal protein uL22 family. In terms of assembly, part of the 50S ribosomal subunit.

Functionally, this protein binds specifically to 23S rRNA; its binding is stimulated by other ribosomal proteins, e.g. L4, L17, and L20. It is important during the early stages of 50S assembly. It makes multiple contacts with different domains of the 23S rRNA in the assembled 50S subunit and ribosome. Its function is as follows. The globular domain of the protein is located near the polypeptide exit tunnel on the outside of the subunit, while an extended beta-hairpin is found that lines the wall of the exit tunnel in the center of the 70S ribosome. This chain is Large ribosomal subunit protein uL22, found in Thermosipho africanus (strain TCF52B).